Reading from the N-terminus, the 117-residue chain is MRHKHGYRKLGRTSSHRAALLKNLTIALVNSGKIETTLPKAKELRAYVERLITRARLGDFNAHRAVFASLQNKNATNKLVTEIAPKFKDRNGGYTKIIKTRIRRGDAAEMAFIEFVA.

Belongs to the bacterial ribosomal protein bL17 family. In terms of assembly, part of the 50S ribosomal subunit. Contacts protein L32.

This is Large ribosomal subunit protein bL17 from Campylobacter jejuni subsp. doylei (strain ATCC BAA-1458 / RM4099 / 269.97).